Here is a 267-residue protein sequence, read N- to C-terminus: 4-hydroxy-tetrahydrodipicolinate reductase (267 aa).

8-13 (GANGRM) contributes to the NAD(+) binding site. NADP(+) is bound at residue R35. NAD(+) is bound by residues 98-100 (GTT) and 122-125 (AANY). H155 serves as the catalytic Proton donor/acceptor. Residue H156 coordinates (S)-2,3,4,5-tetrahydrodipicolinate. The Proton donor role is filled by K159. Residue 165–166 (GT) participates in (S)-2,3,4,5-tetrahydrodipicolinate binding.

It belongs to the DapB family.

The protein resides in the cytoplasm. It catalyses the reaction (S)-2,3,4,5-tetrahydrodipicolinate + NAD(+) + H2O = (2S,4S)-4-hydroxy-2,3,4,5-tetrahydrodipicolinate + NADH + H(+). The enzyme catalyses (S)-2,3,4,5-tetrahydrodipicolinate + NADP(+) + H2O = (2S,4S)-4-hydroxy-2,3,4,5-tetrahydrodipicolinate + NADPH + H(+). Its pathway is amino-acid biosynthesis; L-lysine biosynthesis via DAP pathway; (S)-tetrahydrodipicolinate from L-aspartate: step 4/4. Catalyzes the conversion of 4-hydroxy-tetrahydrodipicolinate (HTPA) to tetrahydrodipicolinate. The polypeptide is 4-hydroxy-tetrahydrodipicolinate reductase (Pseudoalteromonas atlantica (strain T6c / ATCC BAA-1087)).